The sequence spans 1185 residues: Chromosome partition protein Smc (1185 aa).

32-39 (PNGSGKSN) serves as a coordination point for ATP. A coiled-coil region spans residues 167-494 (ISKYKSRKMD…KLNEKNSHLS (328 aa)). Positions 521–639 (TGIIGVVADQ…TDLKSAIEIA (119 aa)) constitute an SMC hinge domain. Residues 677-1031 (RSRKIEDLKK…KVIQEIEETM (355 aa)) adopt a coiled-coil conformation.

The protein belongs to the SMC family. Homodimer.

Its subcellular location is the cytoplasm. Functionally, required for chromosome condensation and partitioning. This Halothermothrix orenii (strain H 168 / OCM 544 / DSM 9562) protein is Chromosome partition protein Smc.